A 353-amino-acid polypeptide reads, in one-letter code: Lysophosphatidic acid receptor 3 (353 aa).

Topologically, residues 1-31 are extracellular; sequence MNECHYDKHMDFFYNRSNTDTVDDWTGTKLV. The N-linked (GlcNAc...) asparagine glycan is linked to N15. Residues 32–52 traverse the membrane as a helical segment; the sequence is IVLCVGTFFCLFIFFSNSLVI. The Cytoplasmic segment spans residues 53–67; it reads AAVIKNRKFHFPFYY. The helical transmembrane segment at 68 to 88 threads the bilayer; that stretch reads LLANLAAADFFAGIAYVFLMF. Residues 89–101 lie on the Extracellular side of the membrane; it reads NTGPVSKTLTVNR. Residues 102-124 traverse the membrane as a helical segment; it reads WFLRQGLLDSSLTASLTNLLVIA. Topologically, residues 125–146 are cytoplasmic; the sequence is VERHMSIMRMRVHSNLTKKRVT. Residues 147 to 167 form a helical membrane-spanning segment; the sequence is LLILLVWAIAIFMGAVPTLGW. The Extracellular portion of the chain corresponds to 168 to 186; sequence NCLCNISACSSLAPIYSRS. A glycan (N-linked (GlcNAc...) asparagine) is linked at N172. Residues 187–207 traverse the membrane as a helical segment; the sequence is YLVFWTVSNLMAFLIMVVVYL. Residues 208 to 240 lie on the Cytoplasmic side of the membrane; the sequence is RIYVYVKRKTNVLSPHTSGSISRRRTPMKLMKT. A helical membrane pass occupies residues 241 to 261; that stretch reads VMTVLGAFVVCWTPGLVVLLL. Over 262–276 the chain is Extracellular; that stretch reads DGLNCRQCGVQHVKR. Residues 277–297 form a helical membrane-spanning segment; that stretch reads WFLLLALLNSVVNPIIYSYKD. Residues 298–353 are Cytoplasmic-facing; sequence EDMYGTMKKMICCFSQENPERRPSRIPSTVLSRSDTGSQYIEDSISQGAVCNKSTS. C309 carries S-palmitoyl cysteine lipidation.

Belongs to the G-protein coupled receptor 1 family. Most abundantly expressed in prostate, testes, pancreas, and heart, with moderate levels in lung and ovary. No detectable expression in brain, placenta, liver, skeletal muscle, kidney, spleen, thymus, small intestine, colon, or peripheral blood leukocytes.

The protein resides in the cell membrane. In terms of biological role, receptor for lysophosphatidic acid (LPA), a mediator of diverse cellular activities. May play a role in the development of ovarian cancer. Seems to be coupled to the G(i)/G(o) and G(q) families of heteromeric G proteins. The polypeptide is Lysophosphatidic acid receptor 3 (LPAR3) (Homo sapiens (Human)).